Consider the following 496-residue polypeptide: Glutamate--cysteine ligase B, chloroplastic (496 aa).

Residues 1 to 34 (MAVASRLAVARVAPDGGAAGRRRRRRGRPVVAVP) constitute a chloroplast transit peptide. The tract at residues 14–53 (PDGGAAGRRRRRRGRPVVAVPTAAGRGRGRGGAVAASPPT) is disordered. The segment covering 29 to 38 (PVVAVPTAAG) has biased composition (low complexity). A disulfide bond links Cys-160 and Cys-380.

It belongs to the carboxylate-amine ligase family. Glutamate--cysteine ligase type 2 subfamily. As to quaternary structure, homodimer or monomer when oxidized or reduced, respectively. Post-translationally, the Cys-160-Cys-380 disulfide bridge is known to modulate the enzyme activity according to the redox status. The oxidized form constitutes the active enzyme.

It is found in the plastid. The protein resides in the chloroplast. It catalyses the reaction L-cysteine + L-glutamate + ATP = gamma-L-glutamyl-L-cysteine + ADP + phosphate + H(+). It functions in the pathway sulfur metabolism; glutathione biosynthesis; glutathione from L-cysteine and L-glutamate: step 1/2. The polypeptide is Glutamate--cysteine ligase B, chloroplastic (GSH1-2) (Oryza sativa subsp. japonica (Rice)).